We begin with the raw amino-acid sequence, 291 residues long: 4-hydroxy-tetrahydrodipicolinate synthase (291 aa).

Thr-45 is a binding site for pyruvate. Residue Tyr-133 is the Proton donor/acceptor of the active site. Lys-161 acts as the Schiff-base intermediate with substrate in catalysis. A pyruvate-binding site is contributed by Ile-203.

It belongs to the DapA family. In terms of assembly, homotetramer; dimer of dimers.

The protein localises to the cytoplasm. The enzyme catalyses L-aspartate 4-semialdehyde + pyruvate = (2S,4S)-4-hydroxy-2,3,4,5-tetrahydrodipicolinate + H2O + H(+). The protein operates within amino-acid biosynthesis; L-lysine biosynthesis via DAP pathway; (S)-tetrahydrodipicolinate from L-aspartate: step 3/4. In terms of biological role, catalyzes the condensation of (S)-aspartate-beta-semialdehyde [(S)-ASA] and pyruvate to 4-hydroxy-tetrahydrodipicolinate (HTPA). The polypeptide is 4-hydroxy-tetrahydrodipicolinate synthase (Acidithiobacillus ferrooxidans (strain ATCC 23270 / DSM 14882 / CIP 104768 / NCIMB 8455) (Ferrobacillus ferrooxidans (strain ATCC 23270))).